The sequence spans 36 residues: Photosystem I reaction center subunit VIII (36 aa).

A helical transmembrane segment spans residues 8-28 (AILVPIVGLVFPALSMALFFI).

This sequence belongs to the PsaI family.

The protein resides in the plastid. Its subcellular location is the chloroplast thylakoid membrane. May help in the organization of the PsaL subunit. In Phaeodactylum tricornutum (strain CCAP 1055/1), this protein is Photosystem I reaction center subunit VIII.